We begin with the raw amino-acid sequence, 476 residues long: Bifunctional protein HldE (476 aa).

The segment at M1–T318 is ribokinase. Position 195 to 198 (N195 to E198) interacts with ATP. D264 is an active-site residue. The tract at residues M344–G476 is cytidylyltransferase.

The protein in the N-terminal section; belongs to the carbohydrate kinase PfkB family. This sequence in the C-terminal section; belongs to the cytidylyltransferase family. Homodimer.

The enzyme catalyses D-glycero-beta-D-manno-heptose 7-phosphate + ATP = D-glycero-beta-D-manno-heptose 1,7-bisphosphate + ADP + H(+). It catalyses the reaction D-glycero-beta-D-manno-heptose 1-phosphate + ATP + H(+) = ADP-D-glycero-beta-D-manno-heptose + diphosphate. Its pathway is nucleotide-sugar biosynthesis; ADP-L-glycero-beta-D-manno-heptose biosynthesis; ADP-L-glycero-beta-D-manno-heptose from D-glycero-beta-D-manno-heptose 7-phosphate: step 1/4. It participates in nucleotide-sugar biosynthesis; ADP-L-glycero-beta-D-manno-heptose biosynthesis; ADP-L-glycero-beta-D-manno-heptose from D-glycero-beta-D-manno-heptose 7-phosphate: step 3/4. It functions in the pathway bacterial outer membrane biogenesis; LPS core biosynthesis. Its function is as follows. Catalyzes the phosphorylation of D-glycero-D-manno-heptose 7-phosphate at the C-1 position to selectively form D-glycero-beta-D-manno-heptose-1,7-bisphosphate. Functionally, catalyzes the ADP transfer from ATP to D-glycero-beta-D-manno-heptose 1-phosphate, yielding ADP-D-glycero-beta-D-manno-heptose. The protein is Bifunctional protein HldE of Vibrio vulnificus (strain YJ016).